A 238-amino-acid chain; its full sequence is MTPHINAPEGAFADVVLMPGDPLRAKYIAETFLQDVVEVTNVRNMLGFTGTYKGRKISIMGHGMGIPSCSIYAKELITEYGVKKIIRVGSCGSVRMDVKVRDVIIGLGACTDSKVNRIRFKDNDFAAIADFDMAQAAVQAAKAKGKAVRVGNLFSADLFYTPDVEMFDVMEKYGILGVEMEAAGIYGVAAEYSAKALTICTVSDHIRTHEQTTAEERQLTFNDMIEIALDSVLIGDAQ.

His-4 is a binding site for a purine D-ribonucleoside. Phosphate-binding positions include Gly-20, Arg-24, Arg-43, and 87–90; that span reads RVGS. Residues 179-181 and 203-204 each bind a purine D-ribonucleoside; these read EME and SD. The active-site Proton donor is Asp-204.

The protein belongs to the PNP/UDP phosphorylase family. As to quaternary structure, homohexamer; trimer of homodimers.

The enzyme catalyses a purine D-ribonucleoside + phosphate = a purine nucleobase + alpha-D-ribose 1-phosphate. The catalysed reaction is a purine 2'-deoxy-D-ribonucleoside + phosphate = a purine nucleobase + 2-deoxy-alpha-D-ribose 1-phosphate. Functionally, catalyzes the reversible phosphorolytic breakdown of the N-glycosidic bond in the beta-(deoxy)ribonucleoside molecules, with the formation of the corresponding free purine bases and pentose-1-phosphate. The polypeptide is Purine nucleoside phosphorylase DeoD-type (Haemophilus influenzae (strain PittEE)).